The chain runs to 128 residues: 3-aminoacrylate deaminase RutC (128 aa).

It belongs to the RutC family.

It carries out the reaction (Z)-3-aminoacrylate + H2O + H(+) = 3-oxopropanoate + NH4(+). Its function is as follows. Involved in pyrimidine catabolism. Catalyzes the deamination of 3-aminoacrylate to malonic semialdehyde, a reaction that can also occur spontaneously. RutC may facilitate the reaction and modulate the metabolic fitness, rather than catalyzing essential functions. In Agrobacterium fabrum (strain C58 / ATCC 33970) (Agrobacterium tumefaciens (strain C58)), this protein is 3-aminoacrylate deaminase RutC.